A 1191-amino-acid polypeptide reads, in one-letter code: Serine/threonine-protein kinase dkf-2 (1191 aa).

Disordered stretches follow at residues 11 to 48 (YTSMPSSSTSNHRIDRLSSSSSSTFRRDDFRRHSTTTS) and 108 to 155 (MLSR…GGHV). The segment covering 123 to 139 (TPDDHYSNPSDKRREVP) has biased composition (basic and acidic residues). Positions 140–150 (SIRSTSSNSSS) are enriched in low complexity. 2 consecutive Phorbol-ester/DAG-type zinc fingers follow at residues 314–364 (PHTL…PNNC) and 466–531 (PHTF…AKDC). The interval 549-594 (VSEDRDDDLSLRSGSGGHKKAQNTPSAPLQGSEGSGSPGGAVVSFA) is disordered. The PH domain occupies 632-713 (LLKEGWIVHY…VYFVYSSLTD (82 aa)). The interval 730 to 786 (PSTVSSTDSGYLGSSGASSSCVRSREGSTVSSTITVDRTRRGGSTTSTENSEAESES) is disordered. Low complexity predominate over residues 738-751 (SGYLGSSGASSSCV). Polar residues predominate over residues 756 to 765 (GSTVSSTITV). Residues 773 to 786 (STTSTENSEAESES) show a composition bias toward low complexity. Positions 891 to 1147 (IFAEEVLGSG…VAKAQSHIWM (257 aa)) constitute a Protein kinase domain. ATP-binding positions include 897 to 905 (LGSGQFGTV) and Lys920. Asp1014 (proton acceptor) is an active-site residue. 2 positions are modified to phosphoserine: Ser1046 and Ser1050.

It belongs to the protein kinase superfamily. CAMK Ser/Thr protein kinase family. PKD subfamily. Mg(2+) serves as cofactor. In terms of processing, phosphorylation on Ser-1046 is the dominant regulator of catalysis, phosphorylation on Ser-1050 has a lesser effect. Prolonged phosphorylation results in ubiquitination and degradation.

Its subcellular location is the cytoplasm. The protein localises to the membrane. The catalysed reaction is L-seryl-[protein] + ATP = O-phospho-L-seryl-[protein] + ADP + H(+). It carries out the reaction L-threonyl-[protein] + ATP = O-phospho-L-threonyl-[protein] + ADP + H(+). Its activity is regulated as follows. Activated by DAG and phorbol esters. Phorbol-ester/DAG-type domain 1 binds phorbol ester with low affinity. Phorbol-ester/DAG-type domain 2 binds phorbol ester with high affinity and targets the kinase to the cell periphery, enabling phosphorylation and activation by colocalized tpa-1. Both domains 1 and 2 appear to bind DAG with equal affinity so may contribute equally to translocation and activation. Its function is as follows. Converts transient diacylglycerol (DAG) signals into prolonged physiological effects, downstream of PKC. Acts in the intestine to regulate both innate immunity by promoting activation of pmk-1 and also stress response and life span by acting as an upstream, negative regulator of the daf-16 transcription factor. This is Serine/threonine-protein kinase dkf-2 from Caenorhabditis briggsae.